The primary structure comprises 168 residues: Putative apoptosis regulator A9 (168 aa).

Residues 143–162 (SAFYFLTAAASCLTLLLLYF) traverse the membrane as a helical segment.

It localises to the host membrane. Suppresses apoptosis in host cell and thus facilitates production of progeny virions. In Alcelaphine herpesvirus 1 (strain C500) (AlHV-1), this protein is Putative apoptosis regulator A9 (A9).